The sequence spans 478 residues: Alpha,alpha-trehalose-phosphate synthase [UDP-forming] (478 aa).

D-glucose 6-phosphate-binding residues include tyrosine 89 and aspartate 143. The UDP site is built by arginine 280 and lysine 285. Positions 280 and 285 each coordinate UDP-alpha-D-glucose. Arginine 318 serves as a coordination point for D-glucose 6-phosphate. Residues isoleucine 357 and 383 to 387 (LVSYE) contribute to the UDP site. UDP-alpha-D-glucose-binding positions include isoleucine 357 and 379-387 (DGMNLVSYE).

The protein belongs to the glycosyltransferase 20 family.

The enzyme catalyses D-glucose 6-phosphate + UDP-alpha-D-glucose = alpha,alpha-trehalose 6-phosphate + UDP + H(+). It functions in the pathway carbohydrate biosynthesis. Inhibited by validoxylamine A, a non-reactive trehalose analog. Functionally, synthase catalytic subunit of the trehalose synthase complex that catalyzes the production of trehalose from glucose-6-phosphate and UDP-alpha-D-glucose in a two step process. The polypeptide is Alpha,alpha-trehalose-phosphate synthase [UDP-forming] (Candida albicans (strain SC5314 / ATCC MYA-2876) (Yeast)).